The following is a 210-amino-acid chain: Glutathione S-transferase P (210 aa).

The GST N-terminal domain maps to 2 to 81 (ASYTIVYFPV…HLGRTLGLYG (80 aa)). Tyrosine 4 carries the phosphotyrosine; by EGFR modification. Glutathione is bound by residues tyrosine 8, arginine 14, tryptophan 39, lysine 45, and 52 to 53 (QL). At threonine 62 the chain carries Phosphothreonine. Residue 65-66 (QS) coordinates glutathione. The 122-residue stretch at 83–204 (DQREAALVDM…ASPEHVNRPI (122 aa)) folds into the GST C-terminal domain. An N6-succinyllysine mark is found at lysine 103 and lysine 116. Lysine 128 is subject to N6-acetyllysine.

The protein belongs to the GST superfamily. Pi family. In terms of assembly, homodimer. Interacts with CDK5.

It is found in the cytoplasm. The protein resides in the mitochondrion. Its subcellular location is the nucleus. The catalysed reaction is RX + glutathione = an S-substituted glutathione + a halide anion + H(+). It catalyses the reaction prostaglandin J2 + glutathione = prostaglandin J2-S-(R)-glutathione. The enzyme catalyses prostaglandin J2 + glutathione = prostaglandin J2-S-(S)-glutathione. It carries out the reaction prostaglandin A2 + glutathione = prostaglandin A2-S-(S)-glutathione. The catalysed reaction is 11(S)-hydroxy-14(S),15(S)-epoxy-(5Z,8Z,12E)-eicosatrienoate + glutathione = (11S,15S)-dihydroxy-14(R)-S-glutathionyl-(5Z,8Z,12E)-eicosatrienoate. Its function is as follows. Conjugation of reduced glutathione to a wide number of exogenous and endogenous hydrophobic electrophiles. Involved in the formation of glutathione conjugates of both prostaglandin A2 (PGA2) and prostaglandin J2 (PGJ2). Participates in the formation of novel hepoxilin regioisomers. Negatively regulates CDK5 activity via p25/p35 translocation to prevent neurodegeneration. The protein is Glutathione S-transferase P (GSTP1) of Capra hircus (Goat).